The primary structure comprises 418 residues: Probable serine hydroxymethyltransferase (418 aa).

(6S)-5,6,7,8-tetrahydrofolate is bound by residues Leu118 and 122-124 (GHL). An N6-(pyridoxal phosphate)lysine modification is found at Lys226. Residue 351–353 (SPF) coordinates (6S)-5,6,7,8-tetrahydrofolate.

It belongs to the SHMT family. As to quaternary structure, homodimer. Requires pyridoxal 5'-phosphate as cofactor.

The protein localises to the cytoplasm. It carries out the reaction (6R)-5,10-methylene-5,6,7,8-tetrahydrofolate + glycine + H2O = (6S)-5,6,7,8-tetrahydrofolate + L-serine. The protein operates within one-carbon metabolism; tetrahydrofolate interconversion. Functionally, catalyzes the reversible interconversion of serine and glycine with tetrahydrofolate (THF) serving as the one-carbon carrier. This reaction serves as the major source of one-carbon groups required for the biosynthesis of purines, thymidylate, methionine, and other important biomolecules. The sequence is that of Probable serine hydroxymethyltransferase from Mesomycoplasma hyopneumoniae (strain J / ATCC 25934 / NCTC 10110) (Mycoplasma hyopneumoniae).